The primary structure comprises 174 residues: Photosystem I assembly protein Ycf4 (174 aa).

A run of 2 helical transmembrane segments spans residues 11-31 (LSNI…FLNG) and 56-76 (IILM…CLTI).

This sequence belongs to the Ycf4 family.

It localises to the plastid. The protein resides in the chloroplast thylakoid membrane. In terms of biological role, seems to be required for the assembly of the photosystem I complex. This Emiliania huxleyi (Coccolithophore) protein is Photosystem I assembly protein Ycf4.